We begin with the raw amino-acid sequence, 477 residues long: Cysteine--tRNA ligase (477 aa).

Cysteine 29 contributes to the Zn(2+) binding site. Residues 31 to 41 (PTVYDYPHLGH) carry the 'HIGH' region motif. Zn(2+) contacts are provided by cysteine 209, histidine 234, and glutamate 238. The short motif at 266–270 (KMSKS) is the 'KMSKS' region element. Lysine 269 serves as a coordination point for ATP.

The protein belongs to the class-I aminoacyl-tRNA synthetase family. Zn(2+) is required as a cofactor.

Its subcellular location is the cytoplasm. It carries out the reaction tRNA(Cys) + L-cysteine + ATP = L-cysteinyl-tRNA(Cys) + AMP + diphosphate. The polypeptide is Cysteine--tRNA ligase (cysS) (Pyrococcus abyssi (strain GE5 / Orsay)).